We begin with the raw amino-acid sequence, 265 residues long: Synaptoporin (265 aa).

At 1–4 (MCMV) the chain is on the cytoplasmic side. The 202-residue stretch at 1–202 (MCMVIFAPLF…NIWFVFKETG (202 aa)) folds into the MARVEL domain. Residues 5–25 (IFAPLFAIFAFATCGGYSGGL) traverse the membrane as a helical segment. The Vesicular portion of the chain corresponds to 26–81 (RLSVDCVNKTESNLSIDIAFAYPFRLHQVTFEVPTCEGKERQKLALIGDSSSSAEF). N-linked (GlcNAc...) asparagine glycans are attached at residues Asn33 and Asn38. Residues 82–102 (FVTVAVFAFLYSLAATVVYIF) traverse the membrane as a helical segment. The Cytoplasmic segment spans residues 103 to 114 (FQNKYRENNRGP). A helical membrane pass occupies residues 115-135 (LIDFIVTVVFSFLWLVGSSAW). The Vesicular segment spans residues 136-177 (AKGLSDVKVATDPKEVLLLMSACKQPSNKCMAIHSPVMSSLN). A helical membrane pass occupies residues 178 to 198 (TSVVFGFLNFILWAGNIWFVF). The Cytoplasmic segment spans residues 199-265 (KETGWHSSGQ…TGPTSFTNQI (67 aa)). Tandem repeats lie at residues 210 to 214 (YLSDP), 222 to 226 (YNQGG), 227 to 231 (YNQDS), 232 to 236 (YGSSS), and 238 to 242 (YSQQA). The 5 X approximate repeats stretch occupies residues 210 to 242 (YLSDPMEKHSSSYNQGGYNQDSYGSSSGYSQQA). Ser212 carries the phosphoserine modification. The segment at 221–265 (SYNQGGYNQDSYGSSSGYSQQASLGPTSDEFGQQPTGPTSFTNQI) is disordered. The span at 224-243 (QGGYNQDSYGSSSGYSQQAS) shows a compositional bias: low complexity. The span at 244–265 (LGPTSDEFGQQPTGPTSFTNQI) shows a compositional bias: polar residues.

This sequence belongs to the synaptophysin/synaptobrevin family.

The protein localises to the cytoplasmic vesicle. The protein resides in the secretory vesicle. Its subcellular location is the synaptic vesicle membrane. It is found in the synapse. It localises to the synaptosome. In terms of biological role, intrinsic membrane protein of small synaptic vesicles. Probable vesicular channel protein. The polypeptide is Synaptoporin (SYNPR) (Homo sapiens (Human)).